We begin with the raw amino-acid sequence, 319 residues long: UDP-N-acetylenolpyruvoylglucosamine reductase (319 aa).

In terms of domain architecture, FAD-binding PCMH-type spans 35–198 (VGGPAEAMFK…TGCVLAGRPD (164 aa)). Arginine 178 is an active-site residue. Serine 227 (proton donor) is an active-site residue. The active site involves glutamate 302.

It belongs to the MurB family. FAD is required as a cofactor.

The protein localises to the cytoplasm. It carries out the reaction UDP-N-acetyl-alpha-D-muramate + NADP(+) = UDP-N-acetyl-3-O-(1-carboxyvinyl)-alpha-D-glucosamine + NADPH + H(+). It participates in cell wall biogenesis; peptidoglycan biosynthesis. Cell wall formation. The polypeptide is UDP-N-acetylenolpyruvoylglucosamine reductase (Rhodospirillum rubrum (strain ATCC 11170 / ATH 1.1.1 / DSM 467 / LMG 4362 / NCIMB 8255 / S1)).